The following is a 137-amino-acid chain: Large ribosomal subunit protein uL14 (137 aa).

Belongs to the universal ribosomal protein uL14 family. As to quaternary structure, part of the 50S ribosomal subunit. Forms a cluster with proteins L3 and L24e, part of which may contact the 16S rRNA in 2 intersubunit bridges.

Its function is as follows. Binds to 23S rRNA. Forms part of two intersubunit bridges in the 70S ribosome. This Ignicoccus hospitalis (strain KIN4/I / DSM 18386 / JCM 14125) protein is Large ribosomal subunit protein uL14.